The primary structure comprises 132 residues: UPF0332 protein TM_1000 (132 aa).

The protein belongs to the UPF0332 family.

The protein is UPF0332 protein TM_1000 of Thermotoga maritima (strain ATCC 43589 / DSM 3109 / JCM 10099 / NBRC 100826 / MSB8).